We begin with the raw amino-acid sequence, 101 residues long: DNA-binding protein Fis (101 aa).

Positions 77-96 (QTRAANMLGINRGTLRKKLK) form a DNA-binding region, H-T-H motif.

Belongs to the transcriptional regulatory Fis family. Homodimer.

In terms of biological role, activates ribosomal RNA transcription. Plays a direct role in upstream activation of rRNA promoters. The sequence is that of DNA-binding protein Fis from Shewanella sediminis (strain HAW-EB3).